A 380-amino-acid chain; its full sequence is 3-dehydroquinate synthase (380 aa).

NAD(+) is bound by residues 68-73 (PGEPNK), 102-106 (GTVLD), 126-127 (TT), Lys139, and Lys148. Residues Glu181, His243, and His259 each contribute to the Zn(2+) site.

The protein belongs to the sugar phosphate cyclases superfamily. Dehydroquinate synthase family. The cofactor is NAD(+). Co(2+) is required as a cofactor. Zn(2+) serves as cofactor.

Its subcellular location is the cytoplasm. It carries out the reaction 7-phospho-2-dehydro-3-deoxy-D-arabino-heptonate = 3-dehydroquinate + phosphate. Its pathway is metabolic intermediate biosynthesis; chorismate biosynthesis; chorismate from D-erythrose 4-phosphate and phosphoenolpyruvate: step 2/7. In terms of biological role, catalyzes the conversion of 3-deoxy-D-arabino-heptulosonate 7-phosphate (DAHP) to dehydroquinate (DHQ). The protein is 3-dehydroquinate synthase (aroB) of Chlamydia pneumoniae (Chlamydophila pneumoniae).